The chain runs to 85 residues: Large ribosomal subunit protein bL27 (85 aa).

A disordered region spans residues 1–25 (MAHKKGVGSSRNGRDSNPKMLGVKR).

The protein belongs to the bacterial ribosomal protein bL27 family.

This chain is Large ribosomal subunit protein bL27, found in Roseiflexus castenholzii (strain DSM 13941 / HLO8).